A 557-amino-acid chain; its full sequence is Carbamoyl phosphate synthase large chain, N-terminal section (557 aa).

Positions 1 to 402 are carboxyphosphate synthetic domain; the sequence is MPKRTDIKKI…ALLKAVRSLE (402 aa). Residues Arg129, Arg169, Gly175, Gly176, Lys208, Leu210, Glu215, Gly241, Val242, His243, Gln285, and Glu299 each coordinate ATP. In terms of domain architecture, ATP-grasp spans 133–328; it reads KETMESIGLK…IAKVAAKLAV (196 aa). Residues Gln285, Glu299, and Asn301 each coordinate Mg(2+). Mn(2+) contacts are provided by Gln285, Glu299, and Asn301. Residues 403–553 form an oligomerization domain region; it reads LDRYGLAFPK…PYYTVDGQEI (151 aa).

The protein belongs to the CarB family. As to quaternary structure, composed of two chains; the small (or glutamine) chain promotes the hydrolysis of glutamine to ammonia, which is used by the large (or ammonia) chain to synthesize carbamoyl phosphate. Tetramer of heterodimers (alpha,beta)4. Mg(2+) serves as cofactor. Requires Mn(2+) as cofactor.

The enzyme catalyses hydrogencarbonate + L-glutamine + 2 ATP + H2O = carbamoyl phosphate + L-glutamate + 2 ADP + phosphate + 2 H(+). It catalyses the reaction hydrogencarbonate + NH4(+) + 2 ATP = carbamoyl phosphate + 2 ADP + phosphate + 2 H(+). Its pathway is amino-acid biosynthesis; L-arginine biosynthesis; carbamoyl phosphate from bicarbonate: step 1/1. The protein operates within pyrimidine metabolism; UMP biosynthesis via de novo pathway; (S)-dihydroorotate from bicarbonate: step 1/3. Its function is as follows. Large subunit of the glutamine-dependent carbamoyl phosphate synthetase (CPSase). CPSase catalyzes the formation of carbamoyl phosphate from the ammonia moiety of glutamine, carbonate, and phosphate donated by ATP, constituting the first step of 2 biosynthetic pathways, one leading to arginine and/or urea and the other to pyrimidine nucleotides. The large subunit (synthetase) binds the substrates ammonia (free or transferred from glutamine from the small subunit), hydrogencarbonate and ATP and carries out an ATP-coupled ligase reaction, activating hydrogencarbonate by forming carboxy phosphate which reacts with ammonia to form carbamoyl phosphate. The polypeptide is Carbamoyl phosphate synthase large chain, N-terminal section (carB1) (Aquifex aeolicus (strain VF5)).